The chain runs to 136 residues: Histone H3 (136 aa).

The disordered stretch occupies residues 1-43 (MARTKQTARKSTGAKAPRKQLASKAARKSAPATGGIKKPHRFR). N6,N6,N6-trimethyllysine; alternate is present on residues lysine 5 and lysine 10. N6,N6-dimethyllysine; alternate is present on lysine 5. N6-acetyllysine; alternate is present on residues lysine 5 and lysine 10. Lysine 5 bears the N6-methyllysine; alternate mark. Serine 11 is modified (phosphoserine). Lysine 15, lysine 19, and lysine 24 each carry N6-acetyllysine. 2 positions are modified to N6,N6,N6-trimethyllysine; alternate: lysine 28 and lysine 37. Residues lysine 28 and lysine 37 each carry the N6,N6-dimethyllysine; alternate modification. Lysine 28, lysine 37, and lysine 57 each carry N6-acetyllysine; alternate. Lysine 28, lysine 37, and lysine 57 each carry N6-methyllysine; alternate. An N6-methyllysine modification is found at lysine 80.

This sequence belongs to the histone H3 family. In terms of assembly, the nucleosome is a histone octamer containing two molecules each of H2A, H2B, H3 and H4 assembled in one H3-H4 heterotetramer and two H2A-H2B heterodimers. The octamer wraps approximately 147 bp of DNA. Phosphorylated to form H3S10ph. H3S10ph promotes subsequent H3K14ac formation by GCN5. H3S10ph is only found in the mitotically dividing MIC, but not in the amitotically dividing MAC. H3S10ph is correlated with chromosome condensation during mitotic or meiotic micronuclear divisions. In terms of processing, acetylation of histone H3 leads to transcriptional activation. H3K14ac formation by GCN5 is promoted by H3S10ph. H3K9acK14ac is the preferred acetylated form of newly synthesized H3. Acetylation occurs almost exclusively in the MAC. Post-translationally, methylated to form H3K4me. H3K4me is only found in the transcriptionally active MAC. Methylated to form H3K9me in developing MACs during conjugation, when genome-wide DNA elimination occurs. At this stage, H3K9me specifically occurs on DNA sequences being eliminated (IES), probably targeted by small scan RNAs (scnRNAs) bound to IES, and is required for efficient IES elimination. H3K9me is required for the interaction with the chromodomains of PDD1 and PDD3. The full-length protein H3S (slow migrating) is converted to H3F (fast migrating) by proteolytic removal of the first 6 residues. H3F is unique to MIC, and processing seems to occur regularly each generation at a specific point in the cell cycle.

It is found in the nucleus. Its subcellular location is the chromosome. Core component of nucleosome. Nucleosomes wrap and compact DNA into chromatin, limiting DNA accessibility to the cellular machineries which require DNA as a template. Histones thereby play a central role in transcription regulation, DNA repair, DNA replication and chromosomal stability. DNA accessibility is regulated via a complex set of post-translational modifications of histones, also called histone code, and nucleosome remodeling. In Tetrahymena pyriformis, this protein is Histone H3.